Here is a 187-residue protein sequence, read N- to C-terminus: Elongation factor P (187 aa).

It belongs to the elongation factor P family.

It localises to the cytoplasm. Its pathway is protein biosynthesis; polypeptide chain elongation. Functionally, involved in peptide bond synthesis. Stimulates efficient translation and peptide-bond synthesis on native or reconstituted 70S ribosomes in vitro. Probably functions indirectly by altering the affinity of the ribosome for aminoacyl-tRNA, thus increasing their reactivity as acceptors for peptidyl transferase. This chain is Elongation factor P, found in Mycobacterium leprae (strain Br4923).